We begin with the raw amino-acid sequence, 69 residues long: Conotoxin Cal12.1p4 (69 aa).

A propeptide spanning residues 1–23 (DLITNSYTRGKPRHVTSWRNLKT) is cleaved from the precursor.

Post-translationally, contains 4 disulfide bonds. Expressed by the venom duct.

The protein resides in the secreted. This Californiconus californicus (California cone) protein is Conotoxin Cal12.1p4.